An 861-amino-acid polypeptide reads, in one-letter code: Transcription factor opdJ (861 aa).

The zn(2)-C6 fungal-type DNA-binding region spans 11–37; sequence CSHCSKAKARCDRKVPCSRCVSKQLVC.

It localises to the nucleus. Functionally, transcription factor that positively regulates the gene cluster that mediates the biosynthesis of oxopyrrolidines, polyketide-amino acid hybrid compounds with feature structures of tetramic acid. The sequence is that of Transcription factor opdJ from Penicillium oxalicum (strain 114-2 / CGMCC 5302) (Penicillium decumbens).